The primary structure comprises 416 residues: MEFVKCLGHPEEFYNLLRFRMGGRRNFIPKMDRNSLSNSLKTCYKYLDQTSRSFAAVIQALDGDIRHAVCVFYLILRAMDTVEDDMAISVEKKIPLLRNFHTFLYEPEWRFTESKEKHRVVLEDFPTISLEFRNLAEKYQTVIADICHRMGCGMAEFLNKDVTSKQDWDKYCHYVAGLVGIGLSRLFSASEFEDPIVGEDTECANSMGLFLQKTNIIRDYLEDQQEGRQFWPQEVWGKYVKKLEDFVKPENVDVAVKCLNELITNALQHIPDVITYLSRLRNQSVFNFCAIPQVMAIATLAACYNNHQVFKGVVKIRKGQAVTLMMDATNMPAVKAIIYQYIEEIYHRVPNSDPSASKAKQLISNIRTQSLPNCQLISRSHYSPIYLSFIMLLAALSWQYLSTLSQVTEDYVQREH.

NADP(+)-binding residues include arginine 52 and arginine 77. Residues aspartate 80, glutamate 83, and aspartate 84 each coordinate Mg(2+). Arginine 218 is a binding site for NADP(+). A helical transmembrane segment spans residues 284–304 (SVFNFCAIPQVMAIATLAACY). Positions 315 and 317 each coordinate NADP(+). A helical transmembrane segment spans residues 384–404 (PIYLSFIMLLAALSWQYLSTL).

The protein belongs to the phytoene/squalene synthase family. It depends on Mg(2+) as a cofactor.

It localises to the endoplasmic reticulum membrane. The enzyme catalyses 2 (2E,6E)-farnesyl diphosphate + NADPH + H(+) = squalene + 2 diphosphate + NADP(+). It catalyses the reaction 2 (2E,6E)-farnesyl diphosphate + NADH + H(+) = squalene + 2 diphosphate + NAD(+). The catalysed reaction is presqualene diphosphate + NADH + H(+) = squalene + diphosphate + NAD(+). It carries out the reaction presqualene diphosphate + NADPH + H(+) = squalene + diphosphate + NADP(+). The enzyme catalyses 2 (2E,6E)-farnesyl diphosphate = presqualene diphosphate + diphosphate. The protein operates within terpene metabolism; lanosterol biosynthesis; lanosterol from farnesyl diphosphate: step 1/3. Functionally, catalyzes the condensation of 2 farnesyl pyrophosphate (FPP) moieties to form squalene. Proceeds in two distinct steps. In the first half-reaction, two molecules of FPP react to form the stable presqualene diphosphate intermediate (PSQPP), with concomitant release of a proton and a molecule of inorganic diphosphate. In the second half-reaction, PSQPP undergoes heterolysis, isomerization, and reduction with NADPH or NADH to form squalene. It is the first committed enzyme of the sterol biosynthesis pathway. This is Squalene synthase (Fdft1) from Rattus norvegicus (Rat).